Consider the following 146-residue polypeptide: MLALIQRVTRASVTVDDQIVGQIGPGLLALIGVEPGDSDAQIRRLAERLLSYRVFGDDAGKMNRSLADTGGGLLLVSQFTLAADTSSGNRPGFSTAAPPLEAEPAFNRLAAICREKHRGGVETGRFGAHMVVDLVNDGPVTFLLRP.

The Gly-cisPro motif, important for rejection of L-amino acids signature appears at 138–139 (GP).

This sequence belongs to the DTD family. Homodimer.

It localises to the cytoplasm. The catalysed reaction is glycyl-tRNA(Ala) + H2O = tRNA(Ala) + glycine + H(+). It catalyses the reaction a D-aminoacyl-tRNA + H2O = a tRNA + a D-alpha-amino acid + H(+). In terms of biological role, an aminoacyl-tRNA editing enzyme that deacylates mischarged D-aminoacyl-tRNAs. Also deacylates mischarged glycyl-tRNA(Ala), protecting cells against glycine mischarging by AlaRS. Acts via tRNA-based rather than protein-based catalysis; rejects L-amino acids rather than detecting D-amino acids in the active site. By recycling D-aminoacyl-tRNA to D-amino acids and free tRNA molecules, this enzyme counteracts the toxicity associated with the formation of D-aminoacyl-tRNA entities in vivo and helps enforce protein L-homochirality. The sequence is that of D-aminoacyl-tRNA deacylase from Xanthomonas axonopodis pv. citri (strain 306).